Here is a 209-residue protein sequence, read N- to C-terminus: uncharacterized protein (209 aa).

The segment covering 1–11 (MMRTNAGKETK) has biased composition (basic and acidic residues). The segment at 1–20 (MMRTNAGKETKGYNPAPADS) is disordered.

This is an uncharacterized protein from Caenorhabditis elegans.